A 270-amino-acid chain; its full sequence is Type III pantothenate kinase (270 aa).

Residue 11–18 coordinates ATP; that stretch reads DAGNSRIK. Substrate-binding positions include Y96 and 103–106; that span reads GSDR. D105 acts as the Proton acceptor in catalysis. T129 is a binding site for ATP. T195 provides a ligand contact to substrate.

This sequence belongs to the type III pantothenate kinase family. In terms of assembly, homodimer. The cofactor is NH4(+). K(+) serves as cofactor.

Its subcellular location is the cytoplasm. It carries out the reaction (R)-pantothenate + ATP = (R)-4'-phosphopantothenate + ADP + H(+). The protein operates within cofactor biosynthesis; coenzyme A biosynthesis; CoA from (R)-pantothenate: step 1/5. Its function is as follows. Catalyzes the phosphorylation of pantothenate (Pan), the first step in CoA biosynthesis. This is Type III pantothenate kinase from Paraburkholderia phytofirmans (strain DSM 17436 / LMG 22146 / PsJN) (Burkholderia phytofirmans).